A 301-amino-acid polypeptide reads, in one-letter code: Protein SCO1 homolog, mitochondrial (301 aa).

The transit peptide at 1–67 directs the protein to the mitochondrion; that stretch reads MAMLVLVPGR…PGYCLGTRPL (67 aa). Residues 63-91 are disordered; the sequence is GTRPLSTARPPPPWSQKGPGDSTRPSKPG. Residues 68 to 92 are Mitochondrial matrix-facing; that stretch reads STARPPPPWSQKGPGDSTRPSKPGP. Residues 93–111 form a helical membrane-spanning segment; the sequence is VSWKSLAITFAIGGALLAG. Topologically, residues 112–301 are mitochondrial intermembrane; sequence MKHVKKEKAE…THMRPYRKKS (190 aa). The segment at 118 to 131 is important for dimerization; that stretch reads EKAEKLEKERQRHI. Positions 169, 173, and 260 each coordinate Cu cation. A disulfide bridge links Cys-169 with Cys-173.

Belongs to the SCO1/2 family. As to quaternary structure, homodimer. Interacts with COA6. Found in a complex with TMEM177, COX20, COA6, MT-CO2/COX2, COX18 and SCO2. Interacts with TMEM177 in a COX20-dependent manner. Interacts with COX20 in a MT-CO2/COX2- and COX18-dependent manner. Interacts with COX16. Predominantly expressed in tissues characterized by high rates of oxidative phosphorylation (OxPhos), including muscle, heart, and brain.

It is found in the mitochondrion. The protein localises to the mitochondrion inner membrane. Its function is as follows. Copper metallochaperone essential for the maturation of cytochrome c oxidase subunit II (MT-CO2/COX2). Not required for the synthesis of MT-CO2/COX2 but plays a crucial role in stabilizing MT-CO2/COX2 during its subsequent maturation. Involved in transporting copper to the Cu(A) site on MT-CO2/COX2. Plays an important role in the regulation of copper homeostasis by controlling the abundance and cell membrane localization of copper transporter CTR1. This is Protein SCO1 homolog, mitochondrial (SCO1) from Homo sapiens (Human).